Consider the following 160-residue polypeptide: Keratin-associated protein 13-4 (160 aa).

4 tandem repeats follow at residues 41 to 50 (CQLGSSLYRD), 51 to 60 (CQKTCWEPAS), 61 to 70 (CQKSCYHPRT), and 77 to 86 (CQTTCSGSLG). The interval 41-86 (CQLGSSLYRDCQKTCWEPASCQKSCYHPRTSMLCCPCQTTCSGSLG) is 4 X 10 AA approximate repeats.

It belongs to the PMG family. As to quaternary structure, interacts with hair keratins.

In terms of biological role, in the hair cortex, hair keratin intermediate filaments are embedded in an interfilamentous matrix, consisting of hair keratin-associated proteins (KRTAP), which are essential for the formation of a rigid and resistant hair shaft through their extensive disulfide bond cross-linking with abundant cysteine residues of hair keratins. The matrix proteins include the high-sulfur and high-glycine-tyrosine keratins. The chain is Keratin-associated protein 13-4 (KRTAP13-4) from Hylobates agilis (Agile gibbon).